The sequence spans 331 residues: Pantothenate kinase (331 aa).

109-116 (GSVAVGKS) serves as a coordination point for ATP.

It belongs to the prokaryotic pantothenate kinase family.

It is found in the cytoplasm. It catalyses the reaction (R)-pantothenate + ATP = (R)-4'-phosphopantothenate + ADP + H(+). The protein operates within cofactor biosynthesis; coenzyme A biosynthesis; CoA from (R)-pantothenate: step 1/5. The chain is Pantothenate kinase from Rhizobium leguminosarum bv. trifolii (strain WSM2304).